The primary structure comprises 137 residues: Fatty acid-binding protein homolog 7 (137 aa).

The protein belongs to the calycin superfamily. Fatty-acid binding protein (FABP) family.

This chain is Fatty acid-binding protein homolog 7 (lbp-7), found in Caenorhabditis elegans.